We begin with the raw amino-acid sequence, 169 residues long: Putative pre-16S rRNA nuclease (169 aa).

The segment covering 1–19 (MTDSDHRLPDRPGEGDPGR) has biased composition (basic and acidic residues). A disordered region spans residues 1-22 (MTDSDHRLPDRPGEGDPGRGRR).

The protein belongs to the YqgF nuclease family.

Its subcellular location is the cytoplasm. In terms of biological role, could be a nuclease involved in processing of the 5'-end of pre-16S rRNA. This Mycobacterium sp. (strain JLS) protein is Putative pre-16S rRNA nuclease.